An 858-amino-acid polypeptide reads, in one-letter code: Protein lines (858 aa).

A disordered region spans residues 1–102; it reads MDTSSAAGSG…NSPTTTPCSS (102 aa). Low complexity-rich tracts occupy residues 20–30 and 65–102; these read STVATSTTSAS and LDAN…PCSS.

The protein belongs to the protein lines family. Interacts with drm. In terms of tissue distribution, expressed throughout the embryo, including the hindgut, posterior midgut and embryonic epidermis.

It localises to the cytoplasm. It is found in the nucleus. Its function is as follows. Has a dual role as a segment polarity protein and as a modulator of the Abd-B protein. Required for Abd-B to activate the transcription of genes (including ems, cut and sal) that are involved in posterior spiracle morphogenesis. Also required for Abd-B to form an eighth abdominal denticle belt. Acts in a hierarchy downstream of drm and upstream of bowl during foregut and hindgut patterning and morphogenesis. Involved in cell rearrangement during elongation of the embryonic hindgut. Required to regulate expression of embryonic hindgut patterning genes in order to establish the large intestine and at least some rectum, and to repress small intestine fate. Required for late wingless (wg)-dependent cell fate specification in the dorsal embryonic epidermis. Acts in concert with wg to regulate expression of wg itself and also to regulate wg-target genes. May have a role in ventral epidermal patterning, independent of wg signaling. The protein is Protein lines of Drosophila melanogaster (Fruit fly).